The primary structure comprises 790 residues: Protein SEY1 (790 aa).

The Cytoplasmic portion of the chain corresponds to 1-692 (MELSEGELSH…KRSIVQHITQ (692 aa)). In terms of domain architecture, GB1/RHD3-type G spans 55 to 284 (GNNYHIISVF…VSNELFKPEY (230 aa)). GTP is bound at residue 65–72 (GSQSTGKS). A helical transmembrane segment spans residues 693–713 (IPYYIYLIILVLGWNEFMAII). The Lumenal segment spans residues 714 to 716 (RNP). Residues 717–737 (LFFSLSIVLGATVYVLYYLGL) form a helical membrane-spanning segment. The Cytoplasmic portion of the chain corresponds to 738 to 790 (LRPALVVAQRTMDEVIVMAKTKLREVLIDDHEVTGRQLNKMAGSKENIELDDM).

It belongs to the TRAFAC class dynamin-like GTPase superfamily. GB1/RHD3 GTPase family. RHD3 subfamily.

It is found in the endoplasmic reticulum membrane. Functionally, cooperates with the reticulon proteins and tubule-shaping DP1 family proteins to generate and maintain the structure of the tubular endoplasmic reticulum network. Has GTPase activity, which is required for its function in ER organization. Required for virulence and resistance to cycloheximide. The sequence is that of Protein SEY1 from Candida albicans (strain SC5314 / ATCC MYA-2876) (Yeast).